Consider the following 329-residue polypeptide: Lipoyl synthase (329 aa).

7 residues coordinate [4Fe-4S] cluster: C55, C60, C66, C81, C85, C88, and S292. Residues 67 to 281 form the Radical SAM core domain; the sequence is WEDREATFLI…RDEAEAIGFL (215 aa).

This sequence belongs to the radical SAM superfamily. Lipoyl synthase family. Requires [4Fe-4S] cluster as cofactor.

Its subcellular location is the cytoplasm. It catalyses the reaction [[Fe-S] cluster scaffold protein carrying a second [4Fe-4S](2+) cluster] + N(6)-octanoyl-L-lysyl-[protein] + 2 oxidized [2Fe-2S]-[ferredoxin] + 2 S-adenosyl-L-methionine + 4 H(+) = [[Fe-S] cluster scaffold protein] + N(6)-[(R)-dihydrolipoyl]-L-lysyl-[protein] + 4 Fe(3+) + 2 hydrogen sulfide + 2 5'-deoxyadenosine + 2 L-methionine + 2 reduced [2Fe-2S]-[ferredoxin]. It participates in protein modification; protein lipoylation via endogenous pathway; protein N(6)-(lipoyl)lysine from octanoyl-[acyl-carrier-protein]: step 2/2. Functionally, catalyzes the radical-mediated insertion of two sulfur atoms into the C-6 and C-8 positions of the octanoyl moiety bound to the lipoyl domains of lipoate-dependent enzymes, thereby converting the octanoylated domains into lipoylated derivatives. The polypeptide is Lipoyl synthase (Leifsonia xyli subsp. xyli (strain CTCB07)).